Here is an 85-residue protein sequence, read N- to C-terminus: Exodeoxyribonuclease 7 small subunit (85 aa).

The segment at 66-85 (SGEGEEVPLDTPDAEDGDGE) is disordered. Residues 68 to 85 (EGEEVPLDTPDAEDGDGE) show a composition bias toward acidic residues.

The protein belongs to the XseB family. In terms of assembly, heterooligomer composed of large and small subunits.

It is found in the cytoplasm. It catalyses the reaction Exonucleolytic cleavage in either 5'- to 3'- or 3'- to 5'-direction to yield nucleoside 5'-phosphates.. Functionally, bidirectionally degrades single-stranded DNA into large acid-insoluble oligonucleotides, which are then degraded further into small acid-soluble oligonucleotides. This Thioalkalivibrio sulfidiphilus (strain HL-EbGR7) protein is Exodeoxyribonuclease 7 small subunit.